The primary structure comprises 239 residues: Glutathione S-transferase verG (239 aa).

A GST N-terminal domain is found at 18–101 (KPLIFVMEGR…YLSNKYDAKR (84 aa)). Positions 107-237 (NAAENLEICN…ELDSRKEIAI (131 aa)) constitute a GST C-terminal domain.

It belongs to the GST superfamily.

The enzyme catalyses RX + glutathione = an S-substituted glutathione + a halide anion + H(+). It participates in mycotoxin biosynthesis. In terms of biological role, glutathione S-transferase; part of the gene cluster that mediates the biosynthesis of 11'-deoxyverticillin A, one of the dimeric epipolythiodioxopiperazines (ETPs) from the verticillin family that act as mycotoxins. 11'-deoxyverticillin A is required for normal conidiation. The nonribosomal peptide synthetase verP is speculated to be responsible for condensation of amino acids to form the carbon skeleton of verticillin, whereas the cluster-specific tailoring enzymes are involved in further modifications leading to the production of 11'-deoxyverticillin A. This is Glutathione S-transferase verG from Clonostachys rogersoniana.